Consider the following 127-residue polypeptide: Fluoride-specific ion channel FluC (127 aa).

Transmembrane regions (helical) follow at residues 4 to 24, 36 to 56, 68 to 88, and 98 to 118; these read PILA…GLGL, GTLV…AFFA, LVIT…AEIV, and WAMS…LAGI. Positions 75 and 78 each coordinate Na(+).

It belongs to the fluoride channel Fluc/FEX (TC 1.A.43) family.

The protein localises to the cell inner membrane. The enzyme catalyses fluoride(in) = fluoride(out). Na(+) is not transported, but it plays an essential structural role and its presence is essential for fluoride channel function. Its function is as follows. Fluoride-specific ion channel. Important for reducing fluoride concentration in the cell, thus reducing its toxicity. The protein is Fluoride-specific ion channel FluC of Nitrosomonas europaea (strain ATCC 19718 / CIP 103999 / KCTC 2705 / NBRC 14298).